A 313-amino-acid chain; its full sequence is Olfactory receptor 1D2 (313 aa).

The Extracellular portion of the chain corresponds to 1–25; sequence MDGGNQSEGSEFLLLGMSESPEQQR. A glycan (N-linked (GlcNAc...) asparagine) is linked at Asn5. The chain crosses the membrane as a helical span at residues 26–49; it reads ILFWMFLSMYLVTVLGNVLIILAI. Residues 50–57 lie on the Cytoplasmic side of the membrane; sequence SSDSRLHT. A helical membrane pass occupies residues 58–79; that stretch reads PMYFFLANLSFTDLFFVTNTIP. The Extracellular portion of the chain corresponds to 80–100; the sequence is KMLVNLQSQDKAISYAGCLTQ. Residues Cys97 and Cys189 are joined by a disulfide bond. The chain crosses the membrane as a helical span at residues 101–120; that stretch reads LYFLLSLVTLDNLILAVMAY. Topologically, residues 121–139 are cytoplasmic; it reads DRYVAICCPLHYVTAMSPR. A helical transmembrane segment spans residues 140–158; it reads LCILLLSLCWVFSVLYGLI. Residues 159–196 are Extracellular-facing; the sequence is HTLLMTRVTFCGSRKIHYLFCEMYFLLRLACSNIQINH. Asn195 carries N-linked (GlcNAc...) asparagine glycosylation. Residues 197 to 219 traverse the membrane as a helical segment; that stretch reads TVLXATGCFIFLIPLGFMIXSYA. Residues 220–236 are Cytoplasmic-facing; that stretch reads RIVRAILRIPSATGKYK. The chain crosses the membrane as a helical span at residues 237–259; the sequence is AFSTCASHLAVVSLFYGTLGMVY. Over 260 to 271 the chain is Extracellular; that stretch reads LQPLQTYSTKDS. The helical transmembrane segment at 272–291 threads the bilayer; it reads VATVMYAVVTPMMNPFIYSL. At 292–313 the chain is on the cytoplasmic side; that stretch reads RNKDIHGALGRLLQGKAFQKLT.

It belongs to the G-protein coupled receptor 1 family.

Its subcellular location is the cell membrane. Functionally, odorant receptor. This is Olfactory receptor 1D2 (OR1D2) from Pongo pygmaeus (Bornean orangutan).